The chain runs to 343 residues: Methionine import ATP-binding protein MetN (343 aa).

In terms of domain architecture, ABC transporter spans 2–241; it reads IKLSNITKVF…PKTPLAQKFI (240 aa). 38-45 lines the ATP pocket; that stretch reads GASGAGKS.

It belongs to the ABC transporter superfamily. Methionine importer (TC 3.A.1.24) family. As to quaternary structure, the complex is composed of two ATP-binding proteins (MetN), two transmembrane proteins (MetI) and a solute-binding protein (MetQ).

Its subcellular location is the cell inner membrane. The enzyme catalyses L-methionine(out) + ATP + H2O = L-methionine(in) + ADP + phosphate + H(+). It carries out the reaction D-methionine(out) + ATP + H2O = D-methionine(in) + ADP + phosphate + H(+). In terms of biological role, part of the ABC transporter complex MetNIQ involved in methionine import. Responsible for energy coupling to the transport system. The chain is Methionine import ATP-binding protein MetN from Escherichia coli O6:K15:H31 (strain 536 / UPEC).